A 137-amino-acid polypeptide reads, in one-letter code: MGDNQDMGKSFLETVKFDDRGLVPAIVQDQETGKVLMMAWMNLESLQMTLDKKRACYWSRSRNKLWLKGESSGNMQVVHDILIDCDGDTLLLKVSQTGGACHVGYHSCFYRKATEALSMEICDTLMFNPEDVYGKKS.

Asp-84 is a Mg(2+) binding site. Residue Cys-85 coordinates Zn(2+). Residues Asp-86 and Asp-88 each contribute to the Mg(2+) site. Residues Cys-101 and Cys-108 each contribute to the Zn(2+) site.

Belongs to the PRA-CH family. Homodimer. It depends on Mg(2+) as a cofactor. Requires Zn(2+) as cofactor.

It localises to the cytoplasm. It catalyses the reaction 1-(5-phospho-beta-D-ribosyl)-5'-AMP + H2O = 1-(5-phospho-beta-D-ribosyl)-5-[(5-phospho-beta-D-ribosylamino)methylideneamino]imidazole-4-carboxamide. It functions in the pathway amino-acid biosynthesis; L-histidine biosynthesis; L-histidine from 5-phospho-alpha-D-ribose 1-diphosphate: step 3/9. In terms of biological role, catalyzes the hydrolysis of the adenine ring of phosphoribosyl-AMP. The chain is Phosphoribosyl-AMP cyclohydrolase from Pelodictyon phaeoclathratiforme (strain DSM 5477 / BU-1).